Consider the following 355-residue polypeptide: 3-isopropylmalate dehydrogenase (355 aa).

NAD(+) is bound at residue 77-90 (GAKWDNLPREKRPE). Substrate-binding residues include Arg97, Arg107, Arg135, and Asp220. Asp220, Asp244, and Asp248 together coordinate Mg(2+). 277–289 (GSAPDIAGQGIAN) serves as a coordination point for NAD(+).

This sequence belongs to the isocitrate and isopropylmalate dehydrogenases family. LeuB type 1 subfamily. Homodimer. It depends on Mg(2+) as a cofactor. Mn(2+) is required as a cofactor.

The protein resides in the cytoplasm. It catalyses the reaction (2R,3S)-3-isopropylmalate + NAD(+) = 4-methyl-2-oxopentanoate + CO2 + NADH. The protein operates within amino-acid biosynthesis; L-leucine biosynthesis; L-leucine from 3-methyl-2-oxobutanoate: step 3/4. In terms of biological role, catalyzes the oxidation of 3-carboxy-2-hydroxy-4-methylpentanoate (3-isopropylmalate) to 3-carboxy-4-methyl-2-oxopentanoate. The product decarboxylates to 4-methyl-2 oxopentanoate. The protein is 3-isopropylmalate dehydrogenase of Sulfurimonas denitrificans (strain ATCC 33889 / DSM 1251) (Thiomicrospira denitrificans (strain ATCC 33889 / DSM 1251)).